We begin with the raw amino-acid sequence, 345 residues long: Probable dual-specificity RNA methyltransferase RlmN (345 aa).

Glu90 serves as the catalytic Proton acceptor. The Radical SAM core domain maps to Tyr96 to Asp326. Cys103 and Cys331 are joined by a disulfide. Cys110, Cys114, and Cys117 together coordinate [4Fe-4S] cluster. S-adenosyl-L-methionine contacts are provided by residues Gly157–Glu158, Ser189, Ser212–His214, and Asn288. The active-site S-methylcysteine intermediate is the Cys331.

Belongs to the radical SAM superfamily. RlmN family. [4Fe-4S] cluster serves as cofactor.

The protein localises to the cytoplasm. The enzyme catalyses adenosine(2503) in 23S rRNA + 2 reduced [2Fe-2S]-[ferredoxin] + 2 S-adenosyl-L-methionine = 2-methyladenosine(2503) in 23S rRNA + 5'-deoxyadenosine + L-methionine + 2 oxidized [2Fe-2S]-[ferredoxin] + S-adenosyl-L-homocysteine. The catalysed reaction is adenosine(37) in tRNA + 2 reduced [2Fe-2S]-[ferredoxin] + 2 S-adenosyl-L-methionine = 2-methyladenosine(37) in tRNA + 5'-deoxyadenosine + L-methionine + 2 oxidized [2Fe-2S]-[ferredoxin] + S-adenosyl-L-homocysteine. Functionally, specifically methylates position 2 of adenine 2503 in 23S rRNA and position 2 of adenine 37 in tRNAs. In Clostridium acetobutylicum (strain ATCC 824 / DSM 792 / JCM 1419 / IAM 19013 / LMG 5710 / NBRC 13948 / NRRL B-527 / VKM B-1787 / 2291 / W), this protein is Probable dual-specificity RNA methyltransferase RlmN.